Here is a 65-residue protein sequence, read N- to C-terminus: Cytochrome b-c1 complex subunit 9, mitochondrial (65 aa).

Residues 14–34 (IYVATIFGGAFAFQGFFDVAV) form a helical membrane-spanning segment.

Belongs to the UQCR10/QCR9 family. Component of the ubiquinol-cytochrome c oxidoreductase (cytochrome b-c1 complex, complex III, CIII), a multisubunit enzyme composed of 10 subunits. The complex is composed of 3 respiratory subunits cytochrome b (COB), cytochrome c1 (CYT1) and Rieske protein (RIP1), 2 core protein subunits COR1 and QCR2, and 5 low-molecular weight protein subunits QCR6, QCR7, QCR8, QCR9 and QCR10. The complex exists as an obligatory dimer and forms supercomplexes (SCs) in the inner mitochondrial membrane with a monomer or a dimer of cytochrome c oxidase (complex IV, CIV), resulting in 2 different assemblies (supercomplexes III(2)IV and III(2)IV(2)).

The protein resides in the membrane. It is found in the mitochondrion inner membrane. Component of the ubiquinol-cytochrome c oxidoreductase, a multisubunit transmembrane complex that is part of the mitochondrial electron transport chain which drives oxidative phosphorylation. The complex plays an important role in the uptake of multiple carbon sources present in different host niches. The protein is Cytochrome b-c1 complex subunit 9, mitochondrial of Candida albicans (strain SC5314 / ATCC MYA-2876) (Yeast).